The sequence spans 74 residues: Protein SspS (74 aa).

It belongs to the alpha/beta-type SASP family.

This chain is Protein SspS (sspS), found in Streptococcus pyogenes.